A 212-amino-acid polypeptide reads, in one-letter code: Urease accessory protein UreG 2 (212 aa).

Gly11 to Thr18 contacts GTP.

The protein belongs to the SIMIBI class G3E GTPase family. UreG subfamily. In terms of assembly, homodimer. UreD, UreF and UreG form a complex that acts as a GTP-hydrolysis-dependent molecular chaperone, activating the urease apoprotein by helping to assemble the nickel containing metallocenter of UreC. The UreE protein probably delivers the nickel.

The protein resides in the cytoplasm. Facilitates the functional incorporation of the urease nickel metallocenter. This process requires GTP hydrolysis, probably effectuated by UreG. This is Urease accessory protein UreG 2 from Brucella abortus (strain 2308).